The sequence spans 163 residues: Large ribosomal subunit protein uL10 (163 aa).

This sequence belongs to the universal ribosomal protein uL10 family. In terms of assembly, part of the ribosomal stalk of the 50S ribosomal subunit. The N-terminus interacts with L11 and the large rRNA to form the base of the stalk. The C-terminus forms an elongated spine to which L12 dimers bind in a sequential fashion forming a multimeric L10(L12)X complex.

Forms part of the ribosomal stalk, playing a central role in the interaction of the ribosome with GTP-bound translation factors. This Actinobacillus pleuropneumoniae serotype 5b (strain L20) protein is Large ribosomal subunit protein uL10.